A 559-amino-acid polypeptide reads, in one-letter code: Phosphoinositide 3-phosphatase (559 aa).

A Myotubularin phosphatase domain is found at 120-541 (SWKSFLLENE…SSLRWWSASF (422 aa)). C342 acts as the Phosphocysteine intermediate in catalysis.

It belongs to the protein-tyrosine phosphatase family. Non-receptor class myotubularin subfamily.

It is found in the cytoplasm. The catalysed reaction is a 1,2-diacyl-sn-glycero-3-phospho-(1D-myo-inositol-3-phosphate) + H2O = a 1,2-diacyl-sn-glycero-3-phospho-(1D-myo-inositol) + phosphate. Lipid phosphatase which dephosphorylates phosphatidylinositol 3-monophosphate (PI3P). Involved in the control of PI3P-dependent signaling and in the maintenance of endosomal system integrity. This Schizosaccharomyces pombe (strain 972 / ATCC 24843) (Fission yeast) protein is Phosphoinositide 3-phosphatase.